Here is a 137-residue protein sequence, read N- to C-terminus: MTKTELLWPALITALATMLYLVLVINVGRARAKYGVMPPATTGNEDFERVLRVQYNTLEQLAFFLPGLWLFAIYRDPTIAAILGAVWLLGRILYAWGYYQAAEKRMVGFALGSLSSMILVVGALLSILWQLRQLSQF.

3 consecutive transmembrane segments (helical) span residues E5–I25, I79–Y99, and F109–W129.

The protein belongs to the MAPEG family.

It localises to the cell membrane. This is an uncharacterized protein from Synechocystis sp. (strain ATCC 27184 / PCC 6803 / Kazusa).